The primary structure comprises 420 residues: L-rhamnose isomerase (420 aa).

The Mn(2+) site is built by His262, Asp294, and Asp296.

The protein belongs to the rhamnose isomerase family. As to quaternary structure, homotetramer. The cofactor is Mn(2+).

Its subcellular location is the cytoplasm. It catalyses the reaction L-rhamnopyranose = L-rhamnulose. The protein operates within carbohydrate degradation; L-rhamnose degradation; glycerone phosphate from L-rhamnose: step 1/3. Functionally, catalyzes the interconversion of L-rhamnose and L-rhamnulose. In Pectobacterium atrosepticum (strain SCRI 1043 / ATCC BAA-672) (Erwinia carotovora subsp. atroseptica), this protein is L-rhamnose isomerase.